The following is a 185-amino-acid chain: Elongation factor P (185 aa).

It belongs to the elongation factor P family.

Its subcellular location is the cytoplasm. The protein operates within protein biosynthesis; polypeptide chain elongation. Involved in peptide bond synthesis. Stimulates efficient translation and peptide-bond synthesis on native or reconstituted 70S ribosomes in vitro. Probably functions indirectly by altering the affinity of the ribosome for aminoacyl-tRNA, thus increasing their reactivity as acceptors for peptidyl transferase. The sequence is that of Elongation factor P from Mesomycoplasma hyopneumoniae (strain 232) (Mycoplasma hyopneumoniae).